Reading from the N-terminus, the 190-residue chain is Potassium-transporting ATPase KdpC subunit (190 aa).

The chain crosses the membrane as a helical span at residues 10–30 (VLFAVLTLICGVIYPYAITGI).

It belongs to the KdpC family. The system is composed of three essential subunits: KdpA, KdpB and KdpC.

The protein resides in the cell inner membrane. Part of the high-affinity ATP-driven potassium transport (or Kdp) system, which catalyzes the hydrolysis of ATP coupled with the electrogenic transport of potassium into the cytoplasm. This subunit acts as a catalytic chaperone that increases the ATP-binding affinity of the ATP-hydrolyzing subunit KdpB by the formation of a transient KdpB/KdpC/ATP ternary complex. The polypeptide is Potassium-transporting ATPase KdpC subunit (Herminiimonas arsenicoxydans).